Reading from the N-terminus, the 406-residue chain is Cysteine desulfurase IscS (406 aa).

Pyridoxal 5'-phosphate is bound by residues 75-76 (AT), Asn-155, Gln-183, and 203-205 (SSH). Lys-206 carries the post-translational modification N6-(pyridoxal phosphate)lysine. Thr-243 provides a ligand contact to pyridoxal 5'-phosphate. Catalysis depends on Cys-330, which acts as the Cysteine persulfide intermediate. Residue Cys-330 coordinates [2Fe-2S] cluster.

It belongs to the class-V pyridoxal-phosphate-dependent aminotransferase family. NifS/IscS subfamily. As to quaternary structure, homodimer. Forms a heterotetramer with IscU, interacts with other sulfur acceptors. Pyridoxal 5'-phosphate serves as cofactor.

It localises to the cytoplasm. It catalyses the reaction (sulfur carrier)-H + L-cysteine = (sulfur carrier)-SH + L-alanine. Its pathway is cofactor biosynthesis; iron-sulfur cluster biosynthesis. In terms of biological role, master enzyme that delivers sulfur to a number of partners involved in Fe-S cluster assembly, tRNA modification or cofactor biosynthesis. Catalyzes the removal of elemental sulfur atoms from cysteine to produce alanine. Functions as a sulfur delivery protein for Fe-S cluster synthesis onto IscU, an Fe-S scaffold assembly protein, as well as other S acceptor proteins. This is Cysteine desulfurase IscS from Glaesserella parasuis serovar 5 (strain SH0165) (Haemophilus parasuis).